Reading from the N-terminus, the 1086-residue chain is ATP-dependent helicase/deoxyribonuclease subunit B (1086 aa).

Belongs to the helicase family. AddB/RexB type 2 subfamily. In terms of assembly, heterodimer of AddA and RexB. Requires Mg(2+) as cofactor.

The heterodimer acts as both an ATP-dependent DNA helicase and an ATP-dependent, dual-direction single-stranded exonuclease. Recognizes the chi site generating a DNA molecule suitable for the initiation of homologous recombination. This subunit has 5' -&gt; 3' nuclease activity but not helicase activity. The sequence is that of ATP-dependent helicase/deoxyribonuclease subunit B from Streptococcus uberis (strain ATCC BAA-854 / 0140J).